The following is a 245-amino-acid chain: DNA polymerase III subunit epsilon (245 aa).

Aspartate 11 and glutamate 13 together coordinate a divalent metal cation. Substrate-binding residues include aspartate 11, glutamate 13, glutamine 60, and histidine 65. The active-site Proton acceptor is histidine 161. Aspartate 166 provides a ligand contact to a divalent metal cation. Aspartate 166 contributes to the substrate binding site.

As to quaternary structure, the DNA polymerase holoenzyme is a complex that contains 10 different types of subunits. These subunits are organized into 3 functionally essential subassemblies: the pol III core, the beta sliding clamp processivity factor and the clamp-loading complex. The pol III core (subunits alpha,epsilon and theta) contains the polymerase and the 3'-5' exonuclease proofreading activities. The polymerase is tethered to the template via the sliding clamp processivity factor. The clamp-loading complex assembles the beta processivity factor onto the primer template and plays a central role in the organization and communication at the replication fork. This complex contains delta, delta', psi and chi, and copies of either or both of two different DnaX proteins, gamma and tau. The composition of the holoenzyme is, therefore: (alpha,epsilon,theta)[2]-(gamma/tau)[3]-delta,delta', psi,chi-beta[4]. Mg(2+) serves as cofactor. The cofactor is Mn(2+).

The catalysed reaction is DNA(n) + a 2'-deoxyribonucleoside 5'-triphosphate = DNA(n+1) + diphosphate. DNA polymerase III is a complex, multichain enzyme responsible for most of the replicative synthesis in bacteria. The epsilon subunit contain the editing function and is a proofreading 3'-5' exonuclease. The protein is DNA polymerase III subunit epsilon (dnaQ) of Buchnera aphidicola subsp. Baizongia pistaciae (strain Bp).